Consider the following 396-residue polypeptide: S-adenosylmethionine synthase (396 aa).

Histidine 16 is a binding site for ATP. Aspartate 18 serves as a coordination point for Mg(2+). Glutamate 44 lines the K(+) pocket. The L-methionine site is built by glutamate 57 and glutamine 100. Positions 100–110 (QSVDIAQGVDR) are flexible loop. Residues 165–167 (DAK), aspartate 240, 246–247 (RK), alanine 263, and lysine 267 each bind ATP. Position 240 (aspartate 240) interacts with L-methionine. Lysine 271 lines the L-methionine pocket.

This sequence belongs to the AdoMet synthase family. As to quaternary structure, homotetramer; dimer of dimers. The cofactor is Mg(2+). K(+) serves as cofactor.

It localises to the cytoplasm. It catalyses the reaction L-methionine + ATP + H2O = S-adenosyl-L-methionine + phosphate + diphosphate. It participates in amino-acid biosynthesis; S-adenosyl-L-methionine biosynthesis; S-adenosyl-L-methionine from L-methionine: step 1/1. Functionally, catalyzes the formation of S-adenosylmethionine (AdoMet) from methionine and ATP. The overall synthetic reaction is composed of two sequential steps, AdoMet formation and the subsequent tripolyphosphate hydrolysis which occurs prior to release of AdoMet from the enzyme. The chain is S-adenosylmethionine synthase from Pseudomonas entomophila (strain L48).